Here is a 315-residue protein sequence, read N- to C-terminus: Epithelial cell adhesion molecule (315 aa).

An N-terminal signal peptide occupies residues 1–23 (MAGPQALAFGLLLAVVTATLAAA). Residues 24 to 266 (QRDCVCDNYK…APEFSMQGLT (243 aa)) lie on the Extracellular side of the membrane. 6 cysteine pairs are disulfide-bonded: cysteine 27-cysteine 46, cysteine 29-cysteine 59, cysteine 38-cysteine 48, cysteine 66-cysteine 99, cysteine 110-cysteine 116, and cysteine 118-cysteine 135. A Thyroglobulin type-1 domain is found at 63–135 (ASKCLAMKAE…RTDKDTEITC (73 aa)). A glycan (N-linked (GlcNAc...) asparagine) is linked at asparagine 111. An N-linked (GlcNAc...) asparagine glycan is attached at asparagine 198. The chain crosses the membrane as a helical span at residues 267–289 (AGIIAVIVVVSLAVIAGIVVLVI). Residues 290–315 (STRKKSAKYEKAEIKEMGEIHRELNA) lie on the Cytoplasmic side of the membrane.

It belongs to the EPCAM family. Monomer. Interacts with phosphorylated CLDN7. Glycosylation at Asn-198 is crucial for protein stability.

It localises to the lateral cell membrane. Its subcellular location is the cell junction. The protein localises to the tight junction. Its function is as follows. May act as a physical homophilic interaction molecule between intestinal epithelial cells (IECs) and intraepithelial lymphocytes (IELs) at the mucosal epithelium for providing immunological barrier as a first line of defense against mucosal infection. Plays a role in embryonic stem cells proliferation and differentiation. Up-regulates the expression of FABP5, MYC and cyclins A and E. In Mus musculus (Mouse), this protein is Epithelial cell adhesion molecule (Epcam).